We begin with the raw amino-acid sequence, 81 residues long: Acyl carrier protein (81 aa).

The 76-residue stretch at 2–77 (ASVEEKVKQI…DAVDYITAHA (76 aa)) folds into the Carrier domain. Ser37 is subject to O-(pantetheine 4'-phosphoryl)serine.

This sequence belongs to the acyl carrier protein (ACP) family. Post-translationally, 4'-phosphopantetheine is transferred from CoA to a specific serine of apo-ACP by AcpS. This modification is essential for activity because fatty acids are bound in thioester linkage to the sulfhydryl of the prosthetic group.

The protein localises to the cytoplasm. Its pathway is lipid metabolism; fatty acid biosynthesis. Carrier of the growing fatty acid chain in fatty acid biosynthesis. In Koribacter versatilis (strain Ellin345), this protein is Acyl carrier protein.